We begin with the raw amino-acid sequence, 236 residues long: GLIPR1-like protein 1 (236 aa).

The N-terminal stretch at 1–27 is a signal peptide; the sequence is MALKKKLNFLWTLVLYLIASRLPKAFG. Residues 46–178 form the SCP domain; that stretch reads LNIHNELRRK…FSAGLFVCNY (133 aa). N-linked (GlcNAc...) asparagine glycosylation is present at N126.

The protein belongs to the CRISP family. As to quaternary structure, part of a oolemmal binding multimeric complex (IZUMO1 complex) composed at least of IZUMO1 and GLIPR1L1; the complex assemblage is influenced by the maturation status of the male germ cell. Interacts with IZUMO1. In terms of processing, N-glycosylated. N-glycosylation decreases during the transit in the caput. As to expression, expressed in testis (at protein level). Little or no expression in other tissues tested.

It localises to the cytoplasmic vesicle. The protein resides in the secretory vesicle. Its subcellular location is the acrosome. It is found in the cell membrane. The protein localises to the membrane raft. It localises to the secreted. Required for optimal fertilization at the stage of sperm-oocyte fusion, plays a role in optimizing acrosome function, the translocation of IZUMO1 during the acrosome reaction and the fertilization process. Component of epididymosomes, one type of membranous microvesicules which mediate the transfer of lipids and proteins to spermatozoa plasma membrane during epididymal maturation. Also component of the CD9-positive microvesicules found in the cauda region. This Mus musculus (Mouse) protein is GLIPR1-like protein 1.